Reading from the N-terminus, the 85-residue chain is Large ribosomal subunit protein bL27 (85 aa).

Residues M1–L21 are disordered. Polar residues predominate over residues S9–Q19.

It belongs to the bacterial ribosomal protein bL27 family.

This is Large ribosomal subunit protein bL27 from Pectobacterium atrosepticum (strain SCRI 1043 / ATCC BAA-672) (Erwinia carotovora subsp. atroseptica).